An 878-amino-acid polypeptide reads, in one-letter code: Alanine--tRNA ligase (878 aa).

Positions 567, 571, 668, and 672 each coordinate Zn(2+).

The protein belongs to the class-II aminoacyl-tRNA synthetase family. Requires Zn(2+) as cofactor.

The protein resides in the cytoplasm. It catalyses the reaction tRNA(Ala) + L-alanine + ATP = L-alanyl-tRNA(Ala) + AMP + diphosphate. In terms of biological role, catalyzes the attachment of alanine to tRNA(Ala) in a two-step reaction: alanine is first activated by ATP to form Ala-AMP and then transferred to the acceptor end of tRNA(Ala). Also edits incorrectly charged Ser-tRNA(Ala) and Gly-tRNA(Ala) via its editing domain. The polypeptide is Alanine--tRNA ligase (Magnetococcus marinus (strain ATCC BAA-1437 / JCM 17883 / MC-1)).